Consider the following 109-residue polypeptide: T cell receptor alpha variable 26-1 (109 aa).

A signal peptide spans 1 to 19 (MRLVARVTVFLTFGTIIDA). The region spanning 20–109 (KTTQPTSMDC…TAVYYCIVRV (90 aa)) is the Ig-like domain. A disulfide bond links Cys-39 and Cys-105. Residues Asn-40 and Asn-71 are each glycosylated (N-linked (GlcNAc...) asparagine).

Alpha-beta TR is a heterodimer composed of an alpha and beta chain; disulfide-linked. The alpha-beta TR is associated with the transmembrane signaling CD3 coreceptor proteins to form the TR-CD3 (TcR or TCR). The assembly of alpha-beta TR heterodimers with CD3 occurs in the endoplasmic reticulum where a single alpha-beta TR heterodimer associates with one CD3D-CD3E heterodimer, one CD3G-CD3E heterodimer and one CD247 homodimer forming a stable octameric structure. CD3D-CD3E and CD3G-CD3E heterodimers preferentially associate with TR alpha and TR beta chains, respectively. The association of the CD247 homodimer is the last step of TcR assembly in the endoplasmic reticulum and is required for transport to the cell surface.

The protein resides in the cell membrane. V region of the variable domain of T cell receptor (TR) alpha chain that participates in the antigen recognition. Alpha-beta T cell receptors are antigen specific receptors which are essential to the immune response and are present on the cell surface of T lymphocytes. Recognize peptide-major histocompatibility (MH) (pMH) complexes that are displayed by antigen presenting cells (APC), a prerequisite for efficient T cell adaptive immunity against pathogens. Binding of alpha-beta TR to pMH complex initiates TR-CD3 clustering on the cell surface and intracellular activation of LCK that phosphorylates the ITAM motifs of CD3G, CD3D, CD3E and CD247 enabling the recruitment of ZAP70. In turn ZAP70 phosphorylates LAT, which recruits numerous signaling molecules to form the LAT signalosome. The LAT signalosome propagates signal branching to three major signaling pathways, the calcium, the mitogen-activated protein kinase (MAPK) kinase and the nuclear factor NF-kappa-B (NF-kB) pathways, leading to the mobilization of transcription factors that are critical for gene expression and essential for T cell growth and differentiation. The T cell repertoire is generated in the thymus, by V-(D)-J rearrangement. This repertoire is then shaped by intrathymic selection events to generate a peripheral T cell pool of self-MH restricted, non-autoaggressive T cells. Post-thymic interaction of alpha-beta TR with the pMH complexes shapes TR structural and functional avidity. This is T cell receptor alpha variable 26-1 from Homo sapiens (Human).